Reading from the N-terminus, the 430-residue chain is Adenylosuccinate synthetase (430 aa).

GTP-binding positions include 12-18 (GDEGKGK) and 40-42 (GHT). Residue Asp13 is the Proton acceptor of the active site. Mg(2+) is bound by residues Asp13 and Gly40. IMP is bound by residues 13–16 (DEGK), 38–41 (NAGH), Thr129, Arg143, Gln224, Thr239, and Arg303. His41 (proton donor) is an active-site residue. 299–305 (TVSNRER) provides a ligand contact to substrate. GTP is bound by residues Arg305, 331 to 333 (KLD), and 413 to 415 (STG).

Belongs to the adenylosuccinate synthetase family. Homodimer. The cofactor is Mg(2+).

Its subcellular location is the cytoplasm. The catalysed reaction is IMP + L-aspartate + GTP = N(6)-(1,2-dicarboxyethyl)-AMP + GDP + phosphate + 2 H(+). Its pathway is purine metabolism; AMP biosynthesis via de novo pathway; AMP from IMP: step 1/2. Its function is as follows. Plays an important role in the de novo pathway of purine nucleotide biosynthesis. Catalyzes the first committed step in the biosynthesis of AMP from IMP. The protein is Adenylosuccinate synthetase of Ehrlichia ruminantium (strain Welgevonden).